The sequence spans 86 residues: Large ribosomal subunit protein bL27 (86 aa).

Residues 1–10 are compositionally biased toward gly residues; it reads MAQKKGGGST. The interval 1-21 is disordered; it reads MAQKKGGGSTRNGRDSESKRL.

The protein belongs to the bacterial ribosomal protein bL27 family.

This is Large ribosomal subunit protein bL27 from Cupriavidus pinatubonensis (strain JMP 134 / LMG 1197) (Cupriavidus necator (strain JMP 134)).